A 410-amino-acid chain; its full sequence is Methylamine dehydrogenase heavy chain (410 aa).

An N-terminal signal peptide occupies residues 1–35 (MTHAYTKVRQALCYGSATLGAAALAALIAAGSAAA).

Belongs to the aromatic amine dehydrogenase heavy chain family. In terms of assembly, tetramer of two light and two heavy chains.

It is found in the periplasm. The catalysed reaction is 2 oxidized [amicyanin] + methylamine + H2O = 2 reduced [amicyanin] + formaldehyde + NH4(+) + 2 H(+). Its function is as follows. Methylamine dehydrogenase carries out the oxidation of methylamine. Electrons are passed from methylamine dehydrogenase to amicyanin. This chain is Methylamine dehydrogenase heavy chain (mauB), found in Methylorubrum extorquens (strain ATCC 14718 / DSM 1338 / JCM 2805 / NCIMB 9133 / AM1) (Methylobacterium extorquens).